A 319-amino-acid polypeptide reads, in one-letter code: MKTIGVLTSGGDSPGMNAAIRAVVRSGIYNGCKIMGIKQGYSGLINAKIEEMNLSSVADIIHRGGTILRTARCEEFRTEEGRKKALNVLKVLKIDGVVVIGGDGSFQGAKKLSELGIPTVAVPGTIDNDLGYSDYTIGFDTAMNTVLDAISKIRDTSTSHGRANIIEVMGRHCGDIALYTGLAGGAESIIIPEVGLDIDEICRKLLQGKNRGKLHSLIVLAEGVGGAIDLGKIIEEKTGIETRSTVFGHIQRGGSPTAFDRILASKMGARAVDLLIEEKGNRAVGIKGNQIFDMDIEEALNIENKFDQETFELAKILSI.

G11 provides a ligand contact to ATP. Residue R21 to R25 coordinates ADP. Residues R72–C73 and G102–S105 contribute to the ATP site. Mg(2+) is bound at residue D103. T125–D127 is a substrate binding site. D127 (proton acceptor) is an active-site residue. R154 is a binding site for ADP. Residues R162 and M169 to R171 contribute to the substrate site. ADP is bound by residues G185 to E187, R211, and K213 to H215. Residues E222, R243, and H249–R252 contribute to the substrate site.

Belongs to the phosphofructokinase type A (PFKA) family. ATP-dependent PFK group I subfamily. Prokaryotic clade 'B1' sub-subfamily. As to quaternary structure, homotetramer. Mg(2+) serves as cofactor.

It is found in the cytoplasm. The enzyme catalyses beta-D-fructose 6-phosphate + ATP = beta-D-fructose 1,6-bisphosphate + ADP + H(+). The protein operates within carbohydrate degradation; glycolysis; D-glyceraldehyde 3-phosphate and glycerone phosphate from D-glucose: step 3/4. Its activity is regulated as follows. Allosterically activated by ADP and other diphosphonucleosides, and allosterically inhibited by phosphoenolpyruvate. Catalyzes the phosphorylation of D-fructose 6-phosphate to fructose 1,6-bisphosphate by ATP, the first committing step of glycolysis. In Alkaliphilus metalliredigens (strain QYMF), this protein is ATP-dependent 6-phosphofructokinase.